The chain runs to 271 residues: Pyrroline-5-carboxylate reductase (271 aa).

It belongs to the pyrroline-5-carboxylate reductase family.

It is found in the cytoplasm. The catalysed reaction is L-proline + NADP(+) = (S)-1-pyrroline-5-carboxylate + NADPH + 2 H(+). The enzyme catalyses L-proline + NAD(+) = (S)-1-pyrroline-5-carboxylate + NADH + 2 H(+). Its pathway is amino-acid biosynthesis; L-proline biosynthesis; L-proline from L-glutamate 5-semialdehyde: step 1/1. Functionally, catalyzes the reduction of 1-pyrroline-5-carboxylate (PCA) to L-proline. This Staphylococcus epidermidis (strain ATCC 35984 / DSM 28319 / BCRC 17069 / CCUG 31568 / BM 3577 / RP62A) protein is Pyrroline-5-carboxylate reductase.